Reading from the N-terminus, the 376-residue chain is Transforming growth factor beta-1 proprotein (376 aa).

An N-terminal signal peptide occupies residues 1-22; it reads MRVESLLLALQCLLGFVHYSGA. The segment at 23–68 is straightjacket domain; it reads LSTCSPLDLELIKRKRIEAIRGQILSKLRLSKEPEVDEEKESQNIP. Positions 69 to 258 are arm domain; the sequence is AELISVYNST…SLPLDGNNSS (190 aa). Asparagine 76, asparagine 125, and asparagine 167 each carry an N-linked (GlcNAc...) asparagine glycan. Residues 214–238 are bowtie tail; the sequence is DPQKTFQLKIPGLVLVRGDTETLAV. The Cell attachment site motif lies at 230-232; the sequence is RGD. Cystine bridges form between cysteine 272/cysteine 280, cysteine 308/cysteine 373, and cysteine 312/cysteine 375.

It belongs to the TGF-beta family. In terms of assembly, latency-associated peptide: Homodimer; disulfide-linked. Latency-associated peptide: Interacts with Transforming growth factor beta-1 (TGF-beta-1) chain; interaction is non-covalent and maintains (TGF-beta-1) in a latent state; each Latency-associated peptide (LAP) monomer interacts with TGF-beta-1 in the other monomer. Transforming growth factor beta-1: Homodimer; disulfide-linked. Transforming growth factor beta-1: Interacts with TGF-beta receptors (tgfbr1 and tgfbr2), leading to signal transduction. Interacts with EFEMP2. Post-translationally, transforming growth factor beta-1 proprotein: The precursor proprotein is cleaved in the Golgi apparatus to form Transforming growth factor beta-1 (TGF-beta-1) and Latency-associated peptide (LAP) chains, which remain non-covalently linked, rendering TGF-beta-1 inactive.

It localises to the secreted. The protein resides in the extracellular space. Its subcellular location is the extracellular matrix. Functionally, transforming growth factor beta-1 proprotein: Precursor of the Latency-associated peptide (LAP) and Transforming growth factor beta-1 (TGF-beta-1) chains, which constitute the regulatory and active subunit of TGF-beta-1, respectively. In terms of biological role, required to maintain the Transforming growth factor beta-1 (TGF-beta-1) chain in a latent state during storage in extracellular matrix. Associates non-covalently with TGF-beta-1 and regulates its activation via interaction with 'milieu molecules', such as LTBP1, LRRC32/GARP and LRRC33/NRROS, that control activation of TGF-beta-1. Interaction with integrins (ITGAV:ITGB6 or ITGAV:ITGB8) results in distortion of the Latency-associated peptide chain and subsequent release of the active TGF-beta-1. Its function is as follows. Transforming growth factor beta-1: Multifunctional protein that regulates the growth and differentiation of various cell types and is involved in various processes, such as normal development, immune function, microglia function and responses to neurodegeneration. Activation into mature form follows different steps: following cleavage of the proprotein in the Golgi apparatus, Latency-associated peptide (LAP) and Transforming growth factor beta-1 (TGF-beta-1) chains remain non-covalently linked rendering TGF-beta-1 inactive during storage in extracellular matrix. At the same time, LAP chain interacts with 'milieu molecules', such as ltbp1, lrrc32/garp and lrrc33/nrros that control activation of TGF-beta-1 and maintain it in a latent state during storage in extracellular milieus. TGF-beta-1 is released from LAP by integrins (ITGAV:ITGB6 or ITGAV:ITGB8): integrin-binding to LAP stabilizes an alternative conformation of the LAP bowtie tail and results in distortion of the LAP chain and subsequent release of the active TGF-beta-1. Once activated following release of LAP, TGF-beta-1 acts by binding to TGF-beta receptors (tgfbr1 and tgfbr2), which transduce signal. While expressed by many cells types, TGF-beta-1 only has a very localized range of action within cell environment thanks to fine regulation of its activation by Latency-associated peptide chain (LAP) and 'milieu molecules'. Plays an important role in bone remodeling: acts as a potent stimulator of osteoblastic bone formation. Can promote either T-helper 17 cells (Th17) or regulatory T-cells (Treg) lineage differentiation in a concentration-dependent manner. Can induce epithelial-to-mesenchymal transition (EMT) and cell migration in various cell types. This chain is Transforming growth factor beta-1 proprotein (tgfb1), found in Cyprinus carpio (Common carp).